We begin with the raw amino-acid sequence, 670 residues long: Segment polarity protein dishevelled homolog DVL-1 (670 aa).

Positions 1-85 (MAETKIIYHM…RVVSWLVLAE (85 aa)) constitute a DIX domain. The tract at residues 89–237 (SDAGSQGTDS…LRQADRASSF (149 aa)) is disordered. Positions 142-151 (SHRRERARRR) are enriched in basic residues. The span at 152 to 171 (NREEAARTNGHPRGDRRRDV) shows a compositional bias: basic and acidic residues. Residues 176–192 (DSASTALSSELESSSFV) show a composition bias toward low complexity. At S194 the chain carries Phosphoserine. A compositionally biased stretch (low complexity) spans 200 to 214 (TSRLSSSTEQSTSSR). Basic residues predominate over residues 215-228 (LIRKHKRRRRKQRL). Residues 251 to 323 (TVTLNMERHH…NDDAVRVLRE (73 aa)) enclose the PDZ domain. A DEP domain is found at 400–474 (PDSGLEIRDR…SEQCYYVFGD (75 aa)). Residues 518 to 642 (PGPPPCFPPA…PGGPPVRELA (125 aa)) are disordered. The span at 526-555 (PAYQDPGFSYGSGSTGSQQSEGSKSSGSTR) shows a compositional bias: low complexity. The span at 600-611 (SRGSSPRSQASA) shows a compositional bias: polar residues.

The protein belongs to the DSH family. As to quaternary structure, interacts with CXXC4. Interacts (via PDZ domain) with NXN. Interacts with BRD7 and INVS. Interacts (via PDZ domain) with VANGL1 and VANGL2 (via C-terminus). Interacts with ARRB1; the interaction is enhanced by phosphorylation of DVL1. Interacts with CYLD. Interacts (via PDZ domain) with RYK. Self-associates (via DIX domain) and forms higher homooligomers. Interacts (via PDZ domain) with DACT1 and FZD7, where DACT1 and FZD7 compete for the same binding site. Interacts (via DEP domain) with MUSK; the interaction is direct and mediates the formation a DVL1, MUSK and PAK1 ternary complex involved in AChR clustering. Interacts (via PDZ domain) with TMEM88. Interacts with DCDC2. Interacts with FOXK2. Interacts with PKD1 (via extracellular domain). Interacts (via PDZ domain) with CCDC88C/DAPLE; competes with CCDC88C for binding to frizzled receptor FZD7 and dissociates from CCDC88C following initiation of non-canonical Wnt signaling when CCDC88C displaces DVL1 from ligand-activated FZD7. Ubiquitinated; undergoes both 'Lys-48'-linked ubiquitination, leading to its subsequent degradation by the ubiquitin-proteasome pathway, and 'Lys-63'-linked ubiquitination. The interaction with INVS is required for ubiquitination. Deubiquitinated by CYLD, which acts on 'Lys-63'-linked ubiquitin chains.

It is found in the cell membrane. It localises to the cytoplasm. The protein resides in the cytosol. The protein localises to the cytoplasmic vesicle. Its function is as follows. Participates in Wnt signaling by binding to the cytoplasmic C-terminus of frizzled family members and transducing the Wnt signal to down-stream effectors. Plays a role both in canonical and non-canonical Wnt signaling. Plays a role in the signal transduction pathways mediated by multiple Wnt genes. Required for LEF1 activation upon WNT1 and WNT3A signaling. DVL1 and PAK1 form a ternary complex with MUSK which is important for MUSK-dependent regulation of AChR clustering during the formation of the neuromuscular junction (NMJ). This is Segment polarity protein dishevelled homolog DVL-1 (DVL1) from Pan troglodytes (Chimpanzee).